A 274-amino-acid polypeptide reads, in one-letter code: Thiamine kinase (274 aa).

This sequence belongs to the thiamine kinase family.

It carries out the reaction thiamine + ATP = thiamine phosphate + ADP + H(+). It functions in the pathway cofactor biosynthesis; thiamine diphosphate biosynthesis; thiamine phosphate from thiamine: step 1/1. Functionally, catalyzes the ATP-dependent phosphorylation of thiamine to thiamine phosphate. Is involved in thiamine salvage. This is Thiamine kinase from Shigella boydii serotype 4 (strain Sb227).